The primary structure comprises 443 residues: MAKYFGTDGIRGEVGKSVIKAEFMQKLGNAVGTLINDNGYPGFVIIGQDTRSSGKFLKFALVSGLNAAGIDVIDLGVVPTPIVAFMTVKYKAAAGFVITASHNKFTDNGVKLFSSSGFKLDDALEEEVEAKIDSDFIYQTECKFGNYKVAENFIDEYIENLFERFGSLVNYKGKVVIDCANGAASNHFEALLDRFCIDYISVASNPDGLNINVDCGATCTSNIKKAVIEHNADLGISLDGDADRIIIVDENAQEIDGDGILNIIAQYSNICGGTTGIVGTQMTNMSYENHYKSNNIPFIRSKVGDRYVLEDLVKHGYKIGGESSGHVINLNFGTTGDGLSTAIQLLAIFSQSDKPVSAFKLPGELMQQTMINVPLNFKVTSDHLAKLAGDVAKAEERLGSRGRVLLRPSGTEPVLRVMVEADTKDLATKEAEYLVEKVKQKLV.

The active-site Phosphoserine intermediate is Ser101. Mg(2+) contacts are provided by Ser101, Asp239, Asp241, and Asp243. A Phosphoserine modification is found at Ser101.

It belongs to the phosphohexose mutase family. The cofactor is Mg(2+). In terms of processing, activated by phosphorylation.

The catalysed reaction is alpha-D-glucosamine 1-phosphate = D-glucosamine 6-phosphate. Its function is as follows. Catalyzes the conversion of glucosamine-6-phosphate to glucosamine-1-phosphate. The polypeptide is Phosphoglucosamine mutase (Francisella philomiragia subsp. philomiragia (strain ATCC 25017 / CCUG 19701 / FSC 153 / O#319-036)).